The sequence spans 569 residues: Acyl-CoA transferase FVEG_12629 (569 aa).

The protein belongs to the CoA-transferase III family.

Acyl-CoA transferase; part of the Fusarium detoxification of benzoxazolinone cluster 2 (FDB2) involved in the degradation of benzoxazolinones produced by the host plant. Maize, wheat, and rye produce the 2 benzoxazinone phytoanticipins 2,4-dihy-droxy-7-methoxy-1,4-benzoxazin-3-one (DIMBOA) and 2,4-dihydroxy-1,4-benzoxazin-3-one (DIBOA) that, due to their inherent instability once released, spontaneously degrade to the more stable corresponding benzoxazolinones, 6-methoxy-2-benzoxazolinone (MBOA) and 2-benzoxazolinone (BOA), respectively. The first step in the detoxification of benzoxazolinones involves the hydrolysis of the cyclic ester bond of benzoxazolinones by the FDB1 cluster gamma-lactamase MBL1 to aminophenols. MBL1 is able to convert BOA into 2-aminophenol (2-AP), as well as MBOA into 5-methoxy-2-aminophenol (2-AMP). The FDB2 cluster N-malonyltransferase FDB2/NAT1 then metabolizes aminophenols via N-malonylation to non-toxic malonamic acids. FDB2/NAT1 converts 2-AP into N-(2-hydroxyphenyl) malonamic acid (HPMA) and 2-AMP into N-(2-hydroxy-4-methoxyphenyl) malonamic acid (HMPMA). The duplicated dienlactone hydrolases DLH1 and DLH2 may provide redundant function for hydrolyzing the lactone moiety in the BOA molecule. The roles of the amidases an other enzymes encoded by the 2 FDB clusters have not been identified so far. This chain is Acyl-CoA transferase FVEG_12629, found in Gibberella moniliformis (strain M3125 / FGSC 7600) (Maize ear and stalk rot fungus).